Reading from the N-terminus, the 427-residue chain is Lupus La protein homolog B (427 aa).

An HTH La-type RNA-binding domain is found at 6–98 (DKEQLDLDTK…RRSPAKPLPE (93 aa)). Residues 110–202 (RSVYIKGFPT…EERKLNKSEE (93 aa)) enclose the RRM domain. Disordered regions lie at residues 193 to 220 (EERKLNKSEEKAKSKQEKEEAQKQAEDA) and 319 to 427 (EGKQ…VGDQ). The region spanning 226-348 (EERVGCLLKF…KGRGGKGNDS (123 aa)) is the xRRM domain. Positions 315 to 331 (KKIMEGKQESFNKRKGR) match the Nuclear localization signal motif. Basic residues-rich tracts occupy residues 327–342 (KRKGRDGRKFKGKGRG) and 351–360 (RKKIQFQGKK). Acidic residues predominate over residues 365 to 376 (SSDDEDDMEESE). A compositionally biased stretch (basic and acidic residues) spans 405-427 (RALDDKAEDGPAVKQSKTEVGDQ).

Post-translationally, phosphorylated.

It is found in the nucleus. La protein plays a role in the transcription of RNA polymerase III. It is most probably a transcription termination factor. Binds to the 3' termini of virtually all nascent polymerase III transcripts. The protein is Lupus La protein homolog B (ssb-b) of Xenopus laevis (African clawed frog).